Reading from the N-terminus, the 343-residue chain is Phenylalanine--tRNA ligase alpha subunit (343 aa).

Glu264 serves as a coordination point for Mg(2+).

The protein belongs to the class-II aminoacyl-tRNA synthetase family. Phe-tRNA synthetase alpha subunit type 1 subfamily. As to quaternary structure, tetramer of two alpha and two beta subunits. Mg(2+) is required as a cofactor.

The protein localises to the cytoplasm. The enzyme catalyses tRNA(Phe) + L-phenylalanine + ATP = L-phenylalanyl-tRNA(Phe) + AMP + diphosphate + H(+). This Aromatoleum aromaticum (strain DSM 19018 / LMG 30748 / EbN1) (Azoarcus sp. (strain EbN1)) protein is Phenylalanine--tRNA ligase alpha subunit.